Here is a 483-residue protein sequence, read N- to C-terminus: UDP-N-acetylmuramate--L-alanine ligase (483 aa).

Residue 128–134 participates in ATP binding; sequence GTHGKTT.

The protein belongs to the MurCDEF family.

The protein resides in the cytoplasm. The catalysed reaction is UDP-N-acetyl-alpha-D-muramate + L-alanine + ATP = UDP-N-acetyl-alpha-D-muramoyl-L-alanine + ADP + phosphate + H(+). The protein operates within cell wall biogenesis; peptidoglycan biosynthesis. Functionally, cell wall formation. This is UDP-N-acetylmuramate--L-alanine ligase from Shewanella violacea (strain JCM 10179 / CIP 106290 / LMG 19151 / DSS12).